Here is a 158-residue protein sequence, read N- to C-terminus: Transcription antitermination protein NusB (158 aa).

This sequence belongs to the NusB family.

Involved in transcription antitermination. Required for transcription of ribosomal RNA (rRNA) genes. Binds specifically to the boxA antiterminator sequence of the ribosomal RNA (rrn) operons. This is Transcription antitermination protein NusB from Bartonella henselae (strain ATCC 49882 / DSM 28221 / CCUG 30454 / Houston 1) (Rochalimaea henselae).